The following is a 368-amino-acid chain: Glutamyl-tRNA reductase (368 aa).

Substrate is bound by residues 43–46 (TCHR), S89, 94–96 (EHQ), and Q100. The active-site Nucleophile is C44. NADP(+) is bound at residue 164–169 (GTGMMG).

The protein belongs to the glutamyl-tRNA reductase family. Homodimer.

The enzyme catalyses (S)-4-amino-5-oxopentanoate + tRNA(Glu) + NADP(+) = L-glutamyl-tRNA(Glu) + NADPH + H(+). It functions in the pathway porphyrin-containing compound metabolism; protoporphyrin-IX biosynthesis; 5-aminolevulinate from L-glutamyl-tRNA(Glu): step 1/2. In terms of biological role, catalyzes the NADPH-dependent reduction of glutamyl-tRNA(Glu) to glutamate 1-semialdehyde (GSA). In Thermosipho melanesiensis (strain DSM 12029 / CIP 104789 / BI429), this protein is Glutamyl-tRNA reductase.